Reading from the N-terminus, the 1488-residue chain is Chromosome partition protein MukB (1488 aa).

34–41 provides a ligand contact to ATP; that stretch reads GGNGAGKS. Coiled coils occupy residues 326-418, 444-472, and 509-602; these read LEAD…QYNQ, LDTF…QTAH, and RHLA…QRAP. The flexible hinge stretch occupies residues 666–783; that stretch reads PGGAEDQRLN…SLPIFGRAAR (118 aa). Coiled-coil stretches lie at residues 835–923, 977–1116, and 1209–1265; these read EAEI…AKLE, EMLS…AKAG, and VEAI…LQSV.

Belongs to the SMC family. MukB subfamily. In terms of assembly, homodimerization via its hinge domain. Binds to DNA via its C-terminal region. Interacts, and probably forms a ternary complex, with MukE and MukF via its C-terminal region. The complex formation is stimulated by calcium or magnesium. Interacts with tubulin-related protein FtsZ.

It localises to the cytoplasm. It is found in the nucleoid. In terms of biological role, plays a central role in chromosome condensation, segregation and cell cycle progression. Functions as a homodimer, which is essential for chromosome partition. Involved in negative DNA supercoiling in vivo, and by this means organize and compact chromosomes. May achieve or facilitate chromosome segregation by condensation DNA from both sides of a centrally located replisome during cell division. The sequence is that of Chromosome partition protein MukB from Salmonella paratyphi B (strain ATCC BAA-1250 / SPB7).